Here is a 500-residue protein sequence, read N- to C-terminus: Histidinol dehydrogenase homolog 1 (500 aa).

The interval 1-25 is disordered; the sequence is MPPAGGIFHRPPTTRKSRRLTPRSA. The span at 12-21 shows a compositional bias: basic residues; that stretch reads PTTRKSRRLT. Zn(2+) contacts are provided by Q313 and H316. Catalysis depends on proton acceptor residues E381 and H382. D415 and H475 together coordinate Zn(2+).

This sequence belongs to the histidinol dehydrogenase family. The cofactor is Zn(2+).

In Mesorhizobium japonicum (strain LMG 29417 / CECT 9101 / MAFF 303099) (Mesorhizobium loti (strain MAFF 303099)), this protein is Histidinol dehydrogenase homolog 1.